A 314-amino-acid polypeptide reads, in one-letter code: 4-hydroxy-3-methylbut-2-enyl diphosphate reductase (314 aa).

Cys12 contacts [4Fe-4S] cluster. His41 and His74 together coordinate (2E)-4-hydroxy-3-methylbut-2-enyl diphosphate. His41 and His74 together coordinate dimethylallyl diphosphate. Positions 41 and 74 each coordinate isopentenyl diphosphate. Cys96 provides a ligand contact to [4Fe-4S] cluster. His124 contacts (2E)-4-hydroxy-3-methylbut-2-enyl diphosphate. Residue His124 participates in dimethylallyl diphosphate binding. His124 is a binding site for isopentenyl diphosphate. The Proton donor role is filled by Glu126. A (2E)-4-hydroxy-3-methylbut-2-enyl diphosphate-binding site is contributed by Thr167. Position 197 (Cys197) interacts with [4Fe-4S] cluster. Residues Ser225, Ser226, Asn227, and Ser269 each contribute to the (2E)-4-hydroxy-3-methylbut-2-enyl diphosphate site. 4 residues coordinate dimethylallyl diphosphate: Ser225, Ser226, Asn227, and Ser269. Isopentenyl diphosphate contacts are provided by Ser225, Ser226, Asn227, and Ser269.

The protein belongs to the IspH family. [4Fe-4S] cluster serves as cofactor.

It catalyses the reaction isopentenyl diphosphate + 2 oxidized [2Fe-2S]-[ferredoxin] + H2O = (2E)-4-hydroxy-3-methylbut-2-enyl diphosphate + 2 reduced [2Fe-2S]-[ferredoxin] + 2 H(+). It carries out the reaction dimethylallyl diphosphate + 2 oxidized [2Fe-2S]-[ferredoxin] + H2O = (2E)-4-hydroxy-3-methylbut-2-enyl diphosphate + 2 reduced [2Fe-2S]-[ferredoxin] + 2 H(+). It participates in isoprenoid biosynthesis; dimethylallyl diphosphate biosynthesis; dimethylallyl diphosphate from (2E)-4-hydroxy-3-methylbutenyl diphosphate: step 1/1. It functions in the pathway isoprenoid biosynthesis; isopentenyl diphosphate biosynthesis via DXP pathway; isopentenyl diphosphate from 1-deoxy-D-xylulose 5-phosphate: step 6/6. In terms of biological role, catalyzes the conversion of 1-hydroxy-2-methyl-2-(E)-butenyl 4-diphosphate (HMBPP) into a mixture of isopentenyl diphosphate (IPP) and dimethylallyl diphosphate (DMAPP). Acts in the terminal step of the DOXP/MEP pathway for isoprenoid precursor biosynthesis. In Aliivibrio fischeri (strain MJ11) (Vibrio fischeri), this protein is 4-hydroxy-3-methylbut-2-enyl diphosphate reductase.